Consider the following 36-residue polypeptide: Endoglucanase Cel12A (36 aa).

Belongs to the glycosyl hydrolase 12 (cellulase H) family.

The protein localises to the secreted. It localises to the extracellular space. It carries out the reaction Endohydrolysis of (1-&gt;4)-beta-D-glucosidic linkages in cellulose, lichenin and cereal beta-D-glucans.. Has carboxymethylcellulase activity. This Gloeophyllum trabeum (Brown rot fungus) protein is Endoglucanase Cel12A.